Reading from the N-terminus, the 298-residue chain is Putative cysteine protease YopT-like blr2058 (298 aa).

Residues 1–14 show a composition bias toward basic and acidic residues; the sequence is MYNRVDGEYAHTEQ. Disordered regions lie at residues 1–25 and 59–80; these read MYNR…ADGS and SDAI…SSSS. The segment covering 65 to 80 has biased composition (low complexity); that stretch reads SSNTSGLSTSSLSSSS. Residue C109 is part of the active site. The span at 137–162 shows a compositional bias: basic and acidic residues; the sequence is NHRSAARRQEQSEKLKTQLKEDKAEG. A disordered region spans residues 137-166; it reads NHRSAARRQEQSEKLKTQLKEDKAEGSHNF. Residues H223 and D238 contribute to the active site.

It belongs to the peptidase C58 family.

Functionally, potential cysteine protease, which may play a central role after invasion of host cell. The polypeptide is Putative cysteine protease YopT-like blr2058 (Bradyrhizobium diazoefficiens (strain JCM 10833 / BCRC 13528 / IAM 13628 / NBRC 14792 / USDA 110)).